A 633-amino-acid chain; its full sequence is DNA-directed RNA polymerase subunit beta' (633 aa).

Positions 72, 74, 87, and 90 each coordinate Zn(2+). Asp-468, Asp-470, and Asp-472 together coordinate Mg(2+).

This sequence belongs to the RNA polymerase beta' chain family. RpoC1 subfamily. As to quaternary structure, in plastids the minimal PEP RNA polymerase catalytic core is composed of four subunits: alpha, beta, beta', and beta''. When a (nuclear-encoded) sigma factor is associated with the core the holoenzyme is formed, which can initiate transcription. Mg(2+) is required as a cofactor. Zn(2+) serves as cofactor.

The protein localises to the plastid. It is found in the chloroplast. It catalyses the reaction RNA(n) + a ribonucleoside 5'-triphosphate = RNA(n+1) + diphosphate. DNA-dependent RNA polymerase catalyzes the transcription of DNA into RNA using the four ribonucleoside triphosphates as substrates. The polypeptide is DNA-directed RNA polymerase subunit beta' (Cyanidium caldarium (Red alga)).